The chain runs to 321 residues: D-alanine--D-alanine ligase (321 aa).

The ATP-grasp domain maps to Arg-121–Lys-315. Pro-147–Gln-199 serves as a coordination point for ATP. Residues Glu-268, Glu-282, and Asn-284 each coordinate Mg(2+).

The protein belongs to the D-alanine--D-alanine ligase family. It depends on Mg(2+) as a cofactor. The cofactor is Mn(2+).

The protein localises to the cytoplasm. The enzyme catalyses 2 D-alanine + ATP = D-alanyl-D-alanine + ADP + phosphate + H(+). It participates in cell wall biogenesis; peptidoglycan biosynthesis. Functionally, cell wall formation. This is D-alanine--D-alanine ligase from Rickettsia massiliae (strain Mtu5).